The primary structure comprises 186 residues: tRNA (cytidine(56)-2'-O)-methyltransferase (186 aa).

S-adenosyl-L-methionine is bound by residues L84 and 110 to 114 (GAEKV).

It belongs to the aTrm56 family. In terms of assembly, homodimer.

It localises to the cytoplasm. The enzyme catalyses cytidine(56) in tRNA + S-adenosyl-L-methionine = 2'-O-methylcytidine(56) in tRNA + S-adenosyl-L-homocysteine + H(+). Its function is as follows. Specifically catalyzes the AdoMet-dependent 2'-O-ribose methylation of cytidine at position 56 in tRNAs. This is tRNA (cytidine(56)-2'-O)-methyltransferase from Staphylothermus marinus (strain ATCC 43588 / DSM 3639 / JCM 9404 / F1).